We begin with the raw amino-acid sequence, 224 residues long: Cysteine-rich hydrophobic domain-containing protein 1 (224 aa).

Positions 1–80 (MSILLPNMAE…PPPRVVSEEH (80 aa)) are disordered. Positions 13 to 25 (TISELEEEEEEEA) are enriched in acidic residues. Over residues 26-40 (ATSSSSPSSSSSVSG) the composition is skewed to low complexity. A compositionally biased stretch (acidic residues) spans 41–69 (PDDDEEDEEEEEEEEEEEEEEEEEEEEEA). Residues 42-70 (DDDEEDEEEEEEEEEEEEEEEEEEEEEAP) are a coiled coil.

It belongs to the CHIC family. Palmitoylated. In terms of tissue distribution, equally expressed in various parts of the brain.

It localises to the cell membrane. The protein localises to the cytoplasmic vesicle. This is Cysteine-rich hydrophobic domain-containing protein 1 (CHIC1) from Homo sapiens (Human).